A 408-amino-acid chain; its full sequence is G patch domain-containing protein 4 (408 aa).

Met-1 bears the N-acetylmethionine mark. Thr-4 is modified (phosphothreonine). The region spanning Gly-11–Ala-57 is the G-patch domain. Lys-46 participates in a covalent cross-link: Glycyl lysine isopeptide (Lys-Gly) (interchain with G-Cter in SUMO2). Thr-116 bears the Phosphothreonine mark. Disordered stretches follow at residues Thr-116–Asn-141 and Gly-187–Asp-408. Residues Ser-128 and Ser-130 each carry the phosphoserine modification. Basic and acidic residues-rich tracts occupy residues Arg-222–Arg-236, His-245–Thr-257, and Leu-274–Ser-283. Over residues Glu-340–Leu-354 the composition is skewed to acidic residues. The span at Gly-358–Arg-372 shows a compositional bias: basic and acidic residues. Residues Lys-398–Asp-408 show a composition bias toward basic residues.

The sequence is that of G patch domain-containing protein 4 (GPATCH4) from Bos taurus (Bovine).